Consider the following 2035-residue polypeptide: Ral GTPase-activating protein subunit alpha-1 (2035 aa).

Positions 343-384 (LVSREESKNDTVDKADKTAEPEQSHSNTSTLTEREPSSSSLC) are disordered. A compositionally biased stretch (basic and acidic residues) spans 345 to 365 (SREESKNDTVDKADKTAEPEQ). The segment covering 366 to 384 (SHSNTSTLTEREPSSSSLC) has biased composition (polar residues). 2 positions are modified to phosphoserine: Ser710 and Ser720. The disordered stretch occupies residues 714-754 (SFSRGWSRDQPGQAPMRQRSATTTGSPGTEKARSIVRQKTV). A Phosphothreonine modification is found at Thr753. Ser772 bears the Phosphoserine mark. Position 777 is a phosphothreonine (Thr777). Ser796 is modified (phosphoserine). Positions 807–817 (ERAKVNKEDTS) are enriched in basic and acidic residues. Disordered stretches follow at residues 807 to 834 (ERAK…SANV) and 848 to 911 (SGNA…SHSD). Polar residues-rich tracts occupy residues 824–833 (NSETGGSSAN) and 849–862 (GNAS…SSPG). Phosphoserine occurs at positions 859, 860, and 863. The segment covering 894–911 (SPASAGSSDLMSSDSHSD) has biased composition (low complexity). A phosphoserine mark is found at Ser985, Ser989, Ser993, and Ser999. The segment at 986-1008 (ESASPVHSALGSRSQTPSPSTLN) is disordered. Position 1001 is a phosphothreonine (Thr1001). Phosphoserine occurs at positions 1003 and 1477. The minimal domain that binds to TCF3/E12 stretch occupies residues 1326–2034 (FTNKTVAHVA…PYHHFPADAD (709 aa)). Residues 1713-1746 (SEKQENDVINAILKQYTEEKEFVEKHFNDLNMKA) are a coiled coil. The region spanning 1795 to 2003 (LRNLDSRQCR…EERARYLQTI (209 aa)) is the Rap-GAP domain.

In terms of assembly, component of the heterodimeric RalGAP1 complex with RALGAPB. Heterodimerization is required for activity. Interacts with the HLH region of TCF3/isoform E12. Highly expressed in brain, thymus and testis with lower levels in lung and spleen and barely detectable in heart or liver (at protein level).

The protein resides in the cytoplasm. The protein localises to the nucleus. In terms of biological role, catalytic subunit of the heterodimeric RalGAP1 complex which acts as a GTPase activator for the Ras-like small GTPases RALA and RALB. The protein is Ral GTPase-activating protein subunit alpha-1 (Ralgapa1) of Rattus norvegicus (Rat).